A 397-amino-acid polypeptide reads, in one-letter code: Phosphoglycerate kinase (397 aa).

Residues 21–23 (DFN), Arg37, 60–63 (HLGR), Arg119, and Arg152 contribute to the substrate site. Residues Lys203, Gly294, Glu325, and 354-357 (GGDS) each bind ATP.

The protein belongs to the phosphoglycerate kinase family. In terms of assembly, monomer.

It localises to the cytoplasm. It catalyses the reaction (2R)-3-phosphoglycerate + ATP = (2R)-3-phospho-glyceroyl phosphate + ADP. It participates in carbohydrate degradation; glycolysis; pyruvate from D-glyceraldehyde 3-phosphate: step 2/5. This chain is Phosphoglycerate kinase, found in Chlorobium phaeobacteroides (strain BS1).